The following is a 334-amino-acid chain: Anthranilate phosphoribosyltransferase (334 aa).

Residues G79, 82–83 (GD), S87, 89–92 (NIST), 107–115 (KAGNRSISS), and S119 each bind 5-phospho-alpha-D-ribose 1-diphosphate. G79 is an anthranilate binding site. Position 91 (S91) interacts with Mg(2+). N110 provides a ligand contact to anthranilate. R165 is a binding site for anthranilate. Mg(2+)-binding residues include D224 and E225.

It belongs to the anthranilate phosphoribosyltransferase family. In terms of assembly, homodimer. Mg(2+) is required as a cofactor.

It catalyses the reaction N-(5-phospho-beta-D-ribosyl)anthranilate + diphosphate = 5-phospho-alpha-D-ribose 1-diphosphate + anthranilate. It participates in amino-acid biosynthesis; L-tryptophan biosynthesis; L-tryptophan from chorismate: step 2/5. Its function is as follows. Catalyzes the transfer of the phosphoribosyl group of 5-phosphorylribose-1-pyrophosphate (PRPP) to anthranilate to yield N-(5'-phosphoribosyl)-anthranilate (PRA). This Streptococcus thermophilus (strain ATCC BAA-491 / LMD-9) protein is Anthranilate phosphoribosyltransferase.